A 693-amino-acid chain; its full sequence is MPEVSSGGGCGACGRRHGADASCPTLVRADVRAGGTAHPRCAPVVEAQDPLVGVRCGSFRLVRRLGRGGMGAVYLGEHVSIGSRVAVKVLHAHLTMYPELVQRFHAEARAVNLIGHENIVSIFDMDATPPRPYLIMEFLDGAPLSAWVGTPLAAGAVVSVLSQVCDALQAAHARGIVHRDLKPDNIFLVRRNGNAPFVKVLDFGIAKLADAHMPQTHAGIIVGTPEYMAPEQSLGRGVDGRADLYALGVIAYQLLTGRLPFNDEGLAAQLVAHQLRPPPPPSSVYPAVSAALEHVILRALAKKPEDRYASIAAFRNALQVALAEHVRVSARKTRPGGLAVLERAPVAPDMPTEGQSRGRLGVDARAGHVPSSLASTSQRRLAPAAPAVPRASLVEVPVQVVLRPGESPVRLRGSGLSRGGLFLHGGRVLPPLCSRLPVVLELASGPLSVMCEVVRVVPPAQARVWGMPTGFGVQFVEATAVLKAAVDALLQGEPVRAVPQVPLTEDPAVARLLEAWRQRSAGDAYAVLALEPDSDMGTVRLRTREAWRSLESLEQHSLTPPQRAQVDALRVRVREAAEALGATVQRALYDAWRGNHRGVAKCLEAGLTAEQLESLRREFLARRPQAMGTARSHFQSGGALERDGQLSQALDQYERGLKLAPLEVDMLQRYRRLRRVLGGRATAPTGHDRARSP.

Positions 59-328 constitute a Protein kinase domain; that stretch reads FRLVRRLGRG…QVALAEHVRV (270 aa). ATP is bound by residues 65–73 and Lys-88; that span reads LGRGGMGAV. Asp-180 serves as the catalytic Proton acceptor. Residues 393-491 form the PilZ domain; the sequence is LVEVPVQVVL…LKAAVDALLQ (99 aa). The stretch at 630–663 is one TPR repeat; the sequence is ARSHFQSGGALERDGQLSQALDQYERGLKLAPLE.

Belongs to the protein kinase superfamily. Ser/Thr protein kinase family. In terms of processing, autophosphorylated.

It carries out the reaction L-seryl-[protein] + ATP = O-phospho-L-seryl-[protein] + ADP + H(+). It catalyses the reaction L-threonyl-[protein] + ATP = O-phospho-L-threonyl-[protein] + ADP + H(+). Its activity is regulated as follows. May be regulated by calcium or a calmodulin-like protein. Functionally, plays an essential role in proper timing of early development events. The sequence is that of Serine/threonine-protein kinase Pkn1 (pkn1) from Myxococcus xanthus.